Here is a 222-residue protein sequence, read N- to C-terminus: Germin-like protein subfamily 1 member 14 (222 aa).

The signal sequence occupies residues 1 to 22; that stretch reads MRFSKSLILITLSALVISFAEA. The cysteines at positions 32 and 49 are disulfide-linked. The 152-residue stretch at 63–214 folds into the Cupin type-1 domain; sequence SGLNQAGTTN…AFQLDVNVVK (152 aa). An N-linked (GlcNAc...) asparagine glycan is attached at N78. Mn(2+) is bound by residues H111, H113, E118, and H160.

The protein belongs to the germin family. Oligomer (believed to be a pentamer but probably hexamer).

The protein resides in the secreted. It localises to the extracellular space. It is found in the apoplast. Functionally, may play a role in plant defense. Probably has no oxalate oxidase activity even if the active site is conserved. The polypeptide is Germin-like protein subfamily 1 member 14 (Arabidopsis thaliana (Mouse-ear cress)).